Consider the following 287-residue polypeptide: Protease HtpX (287 aa).

A run of 2 helical transmembrane segments spans residues 4–24 (IFLLIATNFAILLVASIVMSI) and 33–53 (GGLLVFAAIFGFGGSFISLAI). His139 contributes to the Zn(2+) binding site. Glu140 is a catalytic residue. His143 contributes to the Zn(2+) binding site. The next 2 membrane-spanning stretches (helical) occupy residues 154–174 (LIQGVVNTFVIFAARVVAGII) and 195–215 (AVVFVLDMLFGILASMIVAYF). Glu220 is a binding site for Zn(2+).

Belongs to the peptidase M48B family. Requires Zn(2+) as cofactor.

The protein resides in the cell inner membrane. The sequence is that of Protease HtpX from Shewanella frigidimarina (strain NCIMB 400).